A 307-amino-acid polypeptide reads, in one-letter code: Delta-9 acyl-lipid desaturase 2 (307 aa).

A compositionally biased stretch (polar residues) spans 1–17 (MSVTSTVEENHQKNPST). Residues 1 to 21 (MSVTSTVEENHQKNPSTPAAV) are disordered. A helical transmembrane segment spans residues 53–73 (LALLAPFYFTWSALWVTFLFY). The Fe cation site is built by histidine 85 and histidine 90. The Histidine box-1 motif lies at 85–90 (HRNLAH). A helical transmembrane segment spans residues 99-119 (LEYLLAYCALLAIQGDPIDWV). Histidine 122, histidine 125, and histidine 126 together coordinate Fe cation. The Histidine box-2 motif lies at 122–126 (HRYHH). 2 helical membrane-spanning segments follow: residues 182–202 (VLFH…MSFV) and 204–224 (WGMG…NSLC). Positions 225, 254, 257, and 258 each coordinate Fe cation. The short motif at 254–258 (HNNHH) is the Histidine box-3 element.

Belongs to the fatty acid desaturase type 1 family. Fe cation is required as a cofactor. Strongly expressed in flowers, roots, leaves, seedpods, and inflorescence meristems.

The protein resides in the endoplasmic reticulum membrane. The catalysed reaction is a 1-hexacosanoyl-2-acyl-phosphoglycerolipid + 2 Fe(II)-[cytochrome b5] + O2 + 2 H(+) = a 1-[(17Z)-hexacos-17-enoyl]-2-acyl-phosphoglycerolipid + 2 Fe(III)-[cytochrome b5] + 2 H2O. The enzyme catalyses a 1-tetracosanoyl-2-acyl-phosphoglycerolipid + 2 Fe(II)-[cytochrome b5] + O2 + 2 H(+) = a 1-[(15Z)-tetracos-15-enoyl]-2-acyl-phosphoglycerolipid + 2 Fe(III)-[cytochrome b5] + 2 H2O. The protein operates within lipid metabolism; polyunsaturated fatty acid biosynthesis. Functionally, involved in delta-9 desaturation of fatty acids. Plays a role in the production of very-long-chain monounsaturated fatty acids (VLCMUFAs) in seed lipids and in membrane phospholipids and sphingolipids. Acts as C-16:0 desaturase for monogalactosyl diacylglycerol (MGDG) and phosphatidylglycerol (PG). Is an essential component for cold adaptation. Is essential to adjust the acyl composition of organelle membrane lipid composition in response to cold stress. This is Delta-9 acyl-lipid desaturase 2 from Arabidopsis thaliana (Mouse-ear cress).